The following is a 130-amino-acid chain: Small ribosomal subunit protein uS8 (130 aa).

The protein belongs to the universal ribosomal protein uS8 family. As to quaternary structure, part of the 30S ribosomal subunit.

Its function is as follows. One of the primary rRNA binding proteins, it binds directly to 16S rRNA central domain where it helps coordinate assembly of the platform of the 30S subunit. This Pyrobaculum neutrophilum (strain DSM 2338 / JCM 9278 / NBRC 100436 / V24Sta) (Thermoproteus neutrophilus) protein is Small ribosomal subunit protein uS8.